The following is a 199-amino-acid chain: Small ribosomal subunit protein uS4 (199 aa).

The S4 RNA-binding domain occupies 106–170; the sequence is RRLQTIVFRK…SPVANELHPI (65 aa). The disordered stretch occupies residues 177-199; that stretch reads PAQRSAEMKEGQGEASEEGETDE.

Belongs to the universal ribosomal protein uS4 family. Part of the 30S ribosomal subunit. Contacts protein S5. The interaction surface between S4 and S5 is involved in control of translational fidelity.

One of the primary rRNA binding proteins, it binds directly to 16S rRNA where it nucleates assembly of the body of the 30S subunit. In terms of biological role, with S5 and S12 plays an important role in translational accuracy. This chain is Small ribosomal subunit protein uS4, found in Thermoplasma acidophilum (strain ATCC 25905 / DSM 1728 / JCM 9062 / NBRC 15155 / AMRC-C165).